The following is a 237-amino-acid chain: Heme oxygenase (237 aa).

Heme b is bound at residue histidine 17.

This sequence belongs to the heme oxygenase family.

It is found in the plastid. It localises to the chloroplast. The catalysed reaction is heme b + 3 reduced [NADPH--hemoprotein reductase] + 3 O2 = biliverdin IXalpha + CO + Fe(2+) + 3 oxidized [NADPH--hemoprotein reductase] + 3 H2O + H(+). In terms of biological role, catalyzes the opening of the heme ring with the release of iron. Key enzyme in the synthesis of the chromophoric part of the photosynthetic antennae. This chain is Heme oxygenase (pbsA), found in Guillardia theta (Cryptophyte).